Here is a 303-residue protein sequence, read N- to C-terminus: Aspartate carbamoyltransferase catalytic subunit (303 aa).

Positions 51 and 52 each coordinate carbamoyl phosphate. Lys80 contributes to the L-aspartate binding site. Positions 101, 129, and 132 each coordinate carbamoyl phosphate. 2 residues coordinate L-aspartate: Arg162 and Arg221. Positions 260 and 261 each coordinate carbamoyl phosphate.

This sequence belongs to the aspartate/ornithine carbamoyltransferase superfamily. ATCase family. Heterooligomer of catalytic and regulatory chains.

It carries out the reaction carbamoyl phosphate + L-aspartate = N-carbamoyl-L-aspartate + phosphate + H(+). The protein operates within pyrimidine metabolism; UMP biosynthesis via de novo pathway; (S)-dihydroorotate from bicarbonate: step 2/3. Functionally, catalyzes the condensation of carbamoyl phosphate and aspartate to form carbamoyl aspartate and inorganic phosphate, the committed step in the de novo pyrimidine nucleotide biosynthesis pathway. This is Aspartate carbamoyltransferase catalytic subunit from Saccharolobus islandicus (strain M.16.27) (Sulfolobus islandicus).